Here is a 106-residue protein sequence, read N- to C-terminus: Small ribosomal subunit protein mS33 (106 aa).

Ser-2 is subject to N-acetylserine. A disordered region spans residues 81 to 106 (EQRRLKKLRGKGKPRKGEGKRATKKK). The span at 84-94 (RLKKLRGKGKP) shows a compositional bias: basic residues. The segment covering 95–106 (RKGEGKRATKKK) has biased composition (basic and acidic residues).

It belongs to the mitochondrion-specific ribosomal protein mS33 family. Component of the mitochondrial ribosome small subunit (28S) which comprises a 12S rRNA and about 30 distinct proteins.

It localises to the mitochondrion. The chain is Small ribosomal subunit protein mS33 (Mrps33) from Mus musculus (Mouse).